A 297-amino-acid chain; its full sequence is T-cell leukemia homeobox protein 3 (297 aa).

Positions 1-68 (MEPAAGAQGP…LGGPRGGAPY (68 aa)) are disordered. Over residues 32-52 (APPPPPPPPPPPPPPPPPPRG) the composition is skewed to pro residues. The homeobox DNA-binding region spans 172-231 (RKKPRTSFSRVQICELEKRFHRQKYLASAERAALAKSLKMTDAQVKTWFQNRRTKWRRQT).

As to expression, expression is restricted to neurons in the peripheral and central nervous system.

It is found in the nucleus. In terms of biological role, seems to be involved in the development of cranial sensory innervation from peripheral ganglia. The sequence is that of T-cell leukemia homeobox protein 3 (TLX3) from Gallus gallus (Chicken).